Here is a 77-residue protein sequence, read N- to C-terminus: Dermatoxin-B1 (77 aa).

An N-terminal signal peptide occupies residues 1–22 (MAFLKKSLFLVLFLGLVPLSLC). Residues 23–42 (ESEKREGENEEEQEDDQSEE) constitute a propeptide that is removed on maturation. A disordered region spans residues 24–45 (SEKREGENEEEQEDDQSEEKRS). Residues 30–40 (ENEEEQEDDQS) show a composition bias toward acidic residues. Residue Gln-76 is modified to Glutamine amide.

It belongs to the frog skin active peptide (FSAP) family. Dermatoxin subfamily. As to expression, highest expression in skin and to a lesser extent in brain and intestine.

It is found in the secreted. The protein resides in the target cell membrane. In terms of biological role, possesses a potent antimicrobial activity against Gram-positive bacteria B.megaterium, C.glutamicum and S.aureus and mollicutes A.laidlawii and S.melliferum. Less active against Gram-negative bacteria B.cepacia, P.aeruginosa, S.typhimurium and S.meliloti. Probably acts by disturbing membrane functions with its amphipathic structure. This is Dermatoxin-B1 from Phyllomedusa bicolor (Two-colored leaf frog).